The chain runs to 72 residues: Long neurotoxin 1 (72 aa).

5 disulfides stabilise this stretch: Cys3/Cys21, Cys14/Cys42, Cys27/Cys31, Cys46/Cys57, and Cys58/Cys63.

It belongs to the three-finger toxin family. Long-chain subfamily. Type II alpha-neurotoxin sub-subfamily. As to expression, expressed by the venom gland.

The protein localises to the secreted. Functionally, binds with high affinity to muscular (alpha-1/CHRNA1) and neuronal (alpha-7/CHRNA7) nicotinic acetylcholine receptor (nAChR) and inhibits acetylcholine from binding to the receptor, thereby impairing neuromuscular and neuronal transmission. In Naja anchietae (Anchieta's cobra), this protein is Long neurotoxin 1.